Here is a 557-residue protein sequence, read N- to C-terminus: Potassium-transporting ATPase potassium-binding subunit (557 aa).

10 helical membrane passes run 6 to 26, 59 to 79, 127 to 147, 172 to 192, 247 to 267, 278 to 298, 363 to 383, 410 to 430, 475 to 495, and 520 to 540; these read IQLL…GLGL, ALSL…ILFF, AGLT…LLAL, LYVL…FGVV, ISNF…VFLY, WAIF…VWTF, IVFG…LLTV, ILGI…SVSV, VMIA…VLVI, and FYIL…FPVL.

The protein belongs to the KdpA family. As to quaternary structure, the system is composed of three essential subunits: KdpA, KdpB and KdpC.

The protein resides in the cell inner membrane. Functionally, part of the high-affinity ATP-driven potassium transport (or Kdp) system, which catalyzes the hydrolysis of ATP coupled with the electrogenic transport of potassium into the cytoplasm. This subunit binds the periplasmic potassium ions and delivers the ions to the membrane domain of KdpB through an intramembrane tunnel. The protein is Potassium-transporting ATPase potassium-binding subunit of Leptospira interrogans serogroup Icterohaemorrhagiae serovar copenhageni (strain Fiocruz L1-130).